Here is a 142-residue protein sequence, read N- to C-terminus: Large ribosomal subunit protein uL11 (142 aa).

It belongs to the universal ribosomal protein uL11 family. Part of the ribosomal stalk of the 50S ribosomal subunit. Interacts with L10 and the large rRNA to form the base of the stalk. L10 forms an elongated spine to which L12 dimers bind in a sequential fashion forming a multimeric L10(L12)X complex. Post-translationally, one or more lysine residues are methylated.

Forms part of the ribosomal stalk which helps the ribosome interact with GTP-bound translation factors. This chain is Large ribosomal subunit protein uL11, found in Xanthomonas campestris pv. campestris (strain 8004).